Consider the following 398-residue polypeptide: 4-hydroxy-3-methylbut-2-enyl diphosphate reductase (398 aa).

Cys66 is a [4Fe-4S] cluster binding site. His96 serves as a coordination point for (2E)-4-hydroxy-3-methylbut-2-enyl diphosphate. Dimethylallyl diphosphate is bound at residue His96. His96 lines the isopentenyl diphosphate pocket. Cys157 contributes to the [4Fe-4S] cluster binding site. His185 is a binding site for (2E)-4-hydroxy-3-methylbut-2-enyl diphosphate. His185 is a dimethylallyl diphosphate binding site. His185 provides a ligand contact to isopentenyl diphosphate. Glu187 functions as the Proton donor in the catalytic mechanism. Thr250 serves as a coordination point for (2E)-4-hydroxy-3-methylbut-2-enyl diphosphate. Cys288 is a binding site for [4Fe-4S] cluster. Residues Ser317, Ser318, Asn319, and Ser379 each contribute to the (2E)-4-hydroxy-3-methylbut-2-enyl diphosphate site. Dimethylallyl diphosphate contacts are provided by Ser317, Ser318, Asn319, and Ser379. Isopentenyl diphosphate contacts are provided by Ser317, Ser318, Asn319, and Ser379.

The protein belongs to the IspH family. [4Fe-4S] cluster serves as cofactor.

It catalyses the reaction isopentenyl diphosphate + 2 oxidized [2Fe-2S]-[ferredoxin] + H2O = (2E)-4-hydroxy-3-methylbut-2-enyl diphosphate + 2 reduced [2Fe-2S]-[ferredoxin] + 2 H(+). The enzyme catalyses dimethylallyl diphosphate + 2 oxidized [2Fe-2S]-[ferredoxin] + H2O = (2E)-4-hydroxy-3-methylbut-2-enyl diphosphate + 2 reduced [2Fe-2S]-[ferredoxin] + 2 H(+). It participates in isoprenoid biosynthesis; dimethylallyl diphosphate biosynthesis; dimethylallyl diphosphate from (2E)-4-hydroxy-3-methylbutenyl diphosphate: step 1/1. Its pathway is isoprenoid biosynthesis; isopentenyl diphosphate biosynthesis via DXP pathway; isopentenyl diphosphate from 1-deoxy-D-xylulose 5-phosphate: step 6/6. Its function is as follows. Catalyzes the conversion of 1-hydroxy-2-methyl-2-(E)-butenyl 4-diphosphate (HMBPP) into a mixture of isopentenyl diphosphate (IPP) and dimethylallyl diphosphate (DMAPP). Acts in the terminal step of the DOXP/MEP pathway for isoprenoid precursor biosynthesis. In Synechococcus sp. (strain CC9311), this protein is 4-hydroxy-3-methylbut-2-enyl diphosphate reductase.